Here is a 345-residue protein sequence, read N- to C-terminus: KH domain-containing, RNA-binding, signal transduction-associated protein 2 (345 aa).

In terms of domain architecture, KH spans 65–131; sequence LIPVKQYPKF…AKHAHLSDEL (67 aa). Disordered stretches follow at residues 178 to 224 and 321 to 345; these read LNGS…TRGA and SRST…YGRY. Positions 336-345 are enriched in basic and acidic residues; it reads GYREHPYGRY.

This sequence belongs to the KHDRBS family.

The protein localises to the nucleus. Functionally, RNA-binding protein that plays a role in the regulation of alternative splicing. The polypeptide is KH domain-containing, RNA-binding, signal transduction-associated protein 2 (khdrbs2) (Xenopus tropicalis (Western clawed frog)).